The primary structure comprises 522 residues: Light-independent protochlorophyllide reductase subunit B (522 aa).

Aspartate 36 serves as a coordination point for [4Fe-4S] cluster. Catalysis depends on aspartate 290, which acts as the Proton donor. 425-426 (GL) serves as a coordination point for substrate.

This sequence belongs to the ChlB/BchB/BchZ family. As to quaternary structure, protochlorophyllide reductase is composed of three subunits; ChlL, ChlN and ChlB. Forms a heterotetramer of two ChlB and two ChlN subunits. [4Fe-4S] cluster serves as cofactor.

It catalyses the reaction chlorophyllide a + oxidized 2[4Fe-4S]-[ferredoxin] + 2 ADP + 2 phosphate = protochlorophyllide a + reduced 2[4Fe-4S]-[ferredoxin] + 2 ATP + 2 H2O. The protein operates within porphyrin-containing compound metabolism; chlorophyll biosynthesis (light-independent). In terms of biological role, component of the dark-operative protochlorophyllide reductase (DPOR) that uses Mg-ATP and reduced ferredoxin to reduce ring D of protochlorophyllide (Pchlide) to form chlorophyllide a (Chlide). This reaction is light-independent. The NB-protein (ChlN-ChlB) is the catalytic component of the complex. In Synechococcus sp. (strain CC9311), this protein is Light-independent protochlorophyllide reductase subunit B.